The following is a 60-amino-acid chain: DNA gyrase inhibitor YacG (60 aa).

The Zn(2+) site is built by Cys3, Cys6, Cys18, and Cys22. The tract at residues 38-60 (PASSEDEEEPLDQEAETPVAPRH) is disordered. The span at 41–52 (SEDEEEPLDQEA) shows a compositional bias: acidic residues.

This sequence belongs to the DNA gyrase inhibitor YacG family. As to quaternary structure, interacts with GyrB. Zn(2+) is required as a cofactor.

Its function is as follows. Inhibits all the catalytic activities of DNA gyrase by preventing its interaction with DNA. Acts by binding directly to the C-terminal domain of GyrB, which probably disrupts DNA binding by the gyrase. In Ruegeria pomeroyi (strain ATCC 700808 / DSM 15171 / DSS-3) (Silicibacter pomeroyi), this protein is DNA gyrase inhibitor YacG.